A 374-amino-acid polypeptide reads, in one-letter code: uncharacterized protein (374 aa).

Positions 298-332 (TKEKLLKLHSEQKSLSEKINKLSGEKDIEQSMINN) form a coiled coil.

This is an uncharacterized protein from Acanthamoeba polyphaga (Amoeba).